Here is a 296-residue protein sequence, read N- to C-terminus: Probable DNA-directed RNA polymerase III subunit RPC6 (296 aa).

Belongs to the eukaryotic RPC34/RPC39 RNA polymerase subunit family.

The protein resides in the nucleus. Its function is as follows. DNA-dependent RNA polymerase catalyzes the transcription of DNA into RNA using the four ribonucleoside triphosphates as substrates. Specific peripheric component of RNA polymerase III which synthesizes small RNAs, such as 5S rRNA and tRNAs. This Caenorhabditis elegans protein is Probable DNA-directed RNA polymerase III subunit RPC6.